The following is a 264-amino-acid chain: Apolipoprotein A-I (264 aa).

The first 18 residues, 1–18 (MRVVVVTLALLFLTGTQA), serve as a signal peptide directing secretion. A run of 2 repeats spans residues 67 to 88 (LKLA…EDMA) and 89 to 110 (PYYK…AELT). The tract at residues 67–264 (LKLADNLDTL…LLDELQKTVA (198 aa)) is 10 X approximate tandem repeats. The 3; half-length repeat unit spans residues 111–121 (KDLEEVKEKIR). 5 tandem repeats follow at residues 122-143 (PFLD…QRLA), 144-165 (PVAE…QKLT), 166-187 (PVAE…KNLA), 188-209 (PYSD…EKGI), and 210-231 (PQAA…EKMT). One copy of the 9; half-length repeat lies at 232–242 (PLVQDFKERLT). Repeat 10 spans residues 243-264 (PYAENLKTRFISLLDELQKTVA).

Belongs to the apolipoprotein A1/A4/E family. In terms of tissue distribution, major protein of plasma HDL, also found in chylomicrons.

It is found in the secreted. Participates in the reverse transport of cholesterol from tissues to the liver for excretion by promoting cholesterol efflux from tissues and by acting as a cofactor for the lecithin cholesterol acyltransferase (LCAT). In Anas platyrhynchos (Mallard), this protein is Apolipoprotein A-I (APOA1).